The chain runs to 554 residues: Chaperonin GroEL (554 aa).

ATP is bound by residues 30 to 33 (TLGP), Lys51, 87 to 91 (DGTTT), Gly415, 478 to 480 (DAA), and Asp494.

Belongs to the chaperonin (HSP60) family. As to quaternary structure, forms a cylinder of 14 subunits composed of two heptameric rings stacked back-to-back. Interacts with the co-chaperonin GroES.

It is found in the cytoplasm. It catalyses the reaction ATP + H2O + a folded polypeptide = ADP + phosphate + an unfolded polypeptide.. Functionally, together with its co-chaperonin GroES, plays an essential role in assisting protein folding. The GroEL-GroES system forms a nano-cage that allows encapsulation of the non-native substrate proteins and provides a physical environment optimized to promote and accelerate protein folding. This Pelobacter propionicus (strain DSM 2379 / NBRC 103807 / OttBd1) protein is Chaperonin GroEL.